A 217-amino-acid polypeptide reads, in one-letter code: Ribonuclease HII (217 aa).

In terms of domain architecture, RNase H type-2 spans 17–207 (KVIYGVDEAG…CVGQSVSGAR (191 aa)). Positions 23, 24, and 116 each coordinate a divalent metal cation.

It belongs to the RNase HII family. The cofactor is Mn(2+). It depends on Mg(2+) as a cofactor.

Its subcellular location is the cytoplasm. The enzyme catalyses Endonucleolytic cleavage to 5'-phosphomonoester.. Endonuclease that specifically degrades the RNA of RNA-DNA hybrids. The polypeptide is Ribonuclease HII (Nitrosomonas europaea (strain ATCC 19718 / CIP 103999 / KCTC 2705 / NBRC 14298)).